A 595-amino-acid chain; its full sequence is P2X purinoceptor 7 (595 aa).

The Cytoplasmic segment spans residues 1–22 (MPACCSWNDVFQYETNKVTRIQ). Cys-4 carries the S-palmitoyl cysteine lipid modification. Residues 23–46 (SVNYGTIKWILHMTVFSYVSFALM) traverse the membrane as a helical segment. The Extracellular portion of the chain corresponds to 47-328 (SDKLYQRKEP…ILVFGTGGKF (282 aa)). Asn-74 carries an N-linked (GlcNAc...) asparagine glycan. Disulfide bonds link Cys-119-Cys-168, Cys-129-Cys-152, and Cys-135-Cys-162. Position 125 is an ADP-ribosylarginine (Arg-125). N-linked (GlcNAc...) asparagine glycosylation occurs at Asn-187. Residue Thr-189 participates in ATP binding. N-linked (GlcNAc...) asparagine glycans are attached at residues Asn-202 and Asn-213. A disulfide bridge links Cys-216 with Cys-226. N-linked (GlcNAc...) asparagine glycosylation occurs at Asn-241. Cys-260 and Cys-269 are disulfide-bonded. An N-linked (GlcNAc...) asparagine glycan is attached at Asn-284. ATP-binding residues include Arg-294 and Lys-311. Residues 329–353 (DIIQLVVYIGSTLSYFGLATVCIDL) traverse the membrane as a helical segment. Ser-342 is a binding site for Na(+). Over 354–595 (IINTYASTCC…GQYSGFKYPY (242 aa)) the chain is Cytoplasmic. Residues 360 to 377 (STCCRSRVYPSCKCCEPC) are C-cys anchor. Residues Cys-362, Cys-363, Cys-374, and Cys-377 are each lipidated (S-palmitoyl cysteine). Residues 395-595 (KPTLKYVSFV…GQYSGFKYPY (201 aa)) are cytoplasmic ballast. Positions 479, 499, and 506 each coordinate Zn(2+). GTP contacts are provided by Arg-546, His-547, Tyr-550, and Ala-567. Position 572 (Cys-572) interacts with Zn(2+). Residues Lys-583, Ser-589, and Gly-590 each contribute to the GTP site.

This sequence belongs to the P2X receptor family. Homotrimer. Interacts with LAMA3, ITGB2, ACTB, ACTN4, SVIL, MPP3, HSPA1, HSPCB, HSPA8, PIK230 and PTPRB. Interacts (via C-terminus) with EMP2. Post-translationally, phosphorylation results in its inactivation. In terms of processing, ADP-ribosylation at Arg-125 is necessary and sufficient to activate P2RX7 and gate the channel. Palmitoylation of several cysteines in the C-terminal cytoplasmic tail is required for efficient localization to cell surface. Palmitoylation prevents channel desensitization by physically anchoring the palmitoylated groups to the membrane.

Its subcellular location is the cell membrane. The catalysed reaction is Ca(2+)(in) = Ca(2+)(out). It carries out the reaction K(+)(in) = K(+)(out). The enzyme catalyses Na(+)(in) = Na(+)(out). Its activity is regulated as follows. Activated by high extracellular ATP levels (0.1-2.5 mM). The synthetic analog 2'(3')-O-(4-benzoylbenzoyl)ATP (BzATP) acts as a potent agonist. Does not undergo desensitization, instead, undergoes a facilitation process where currents progressively increase with repetitive or prolonged agonist application. Palmitoylation prevents channel desensitization. The permeability of the P2RX7 channel is modulated by the amount of cholesterol in the plasma membrane. Its function is as follows. ATP-gated nonselective transmembrane cation channel that requires high millimolar concentrations of ATP for activation. Upon ATP binding, it rapidly opens to allow the influx of small cations Na(+) and Ca(2+), and the K(+) efflux. Also has the ability to form a large pore in the cell membrane, allowing the passage of large cationic molecules. In microglia, may mediate the transmembrane transport of exogenous NADPH. In immune cells, P2RX7 acts as a molecular sensor in pathological inflammatory states by detecting and responding to high local concentrations of extracellar ATP. In microglial cells, P2RX7 activation leads to the release of pro-inflammatory cytokines, such as IL-1beta and IL-18, through the activation of the NLRP3 inflammasome and caspase-1. Cooperates with KCNK6 to activate NLRP3 inflammasome. Activates death pathways leading to apoptosis and autophagy. Activates death pathways leading to pyroptosis. Functionally, has a higher affinity for ATP, slower deactivation and an increased propensity to form large cation-permeable pores. This Rattus norvegicus (Rat) protein is P2X purinoceptor 7 (P2rx7).